The chain runs to 256 residues: MAVGKNKRLSKGKKGLKKKVIDPFTKKEWFDIKAPSTFENRAVGKTLINRSTGLKNAADGLKGRVVEVCLADLQGSEDHSSRKVKLRVDEVQGKNLLTNFHGIDFTTDKLRSLVRKWQSLVEANVTVKTSDDYVLRIFAIAFTKRQANQIRKTTYAQSSKLREVRKKMIEIMQREVSNCTLAQLTSKLIPEVIGREIEKSTQTILPLQNIHIRKVKLLKQPKFDLGSLLALHGEGSTEEKGKKVSAGFKDVVLETV.

At A2 the chain carries N-acetylalanine; partial.

Belongs to the eukaryotic ribosomal protein eS1 family. As to quaternary structure, component of the small ribosomal subunit. Mature ribosomes consist of a small (40S) and a large (60S) subunit. The 40S subunit contains about 33 different proteins and 1 molecule of RNA (18S). The 60S subunit contains about 49 different proteins and 3 molecules of RNA (25S, 5.8S and 5S).

The protein localises to the cytoplasm. The polypeptide is Small ribosomal subunit protein eS1A (Debaryomyces hansenii (strain ATCC 36239 / CBS 767 / BCRC 21394 / JCM 1990 / NBRC 0083 / IGC 2968) (Yeast)).